Consider the following 455-residue polypeptide: MIAHASRSLSIIGAGLAGSLLAILLSRQGWRITLYERRGDPRVADYESGRSINLALAERGRNALRQAGVEDEVMARAVMMRGRMVHPREGEPQLQRYGRDDSEVIWSIHRSDLNTTLLELAEQAGATVHFHRRLHTVDFDAGYARFIDDRDDSPHDIRFDTLIGADGAGSALRAAMNRRAPLGEDIAFLDHSYKELEIPPADDGSFRIERNALHIWPRGHYMCIALPNHEGTFTVTLFLPNQGDPSFATINTGAQAEALFAREFADTLPLIPNLRADWEQHPPGLLGTLTLDRWHQQGRAVLIGDAAHAMVPFHGQGMNCAFEDCVALARHLMEADDLEGAFAAFEAERKPNARAIQQMALENYLEMRDRVADPAFLLQRELEQELQRRWPTRFVPHYTMVTFLHTPYAEALRRTELQRDMLVAATTGHDSLDNIDWAALEAQIHAQLPVLEGAH.

The protein belongs to the aromatic-ring hydroxylase family. KMO subfamily. FAD serves as cofactor.

It catalyses the reaction L-kynurenine + NADPH + O2 + H(+) = 3-hydroxy-L-kynurenine + NADP(+) + H2O. It functions in the pathway cofactor biosynthesis; NAD(+) biosynthesis; quinolinate from L-kynurenine: step 1/3. Functionally, catalyzes the hydroxylation of L-kynurenine (L-Kyn) to form 3-hydroxy-L-kynurenine (L-3OHKyn). Required for synthesis of quinolinic acid. In Stenotrophomonas maltophilia (strain K279a), this protein is Kynurenine 3-monooxygenase.